A 377-amino-acid polypeptide reads, in one-letter code: Serine protease grass (377 aa).

An N-terminal signal peptide occupies residues 1 to 26 (MMIASSLAVLYGIAIVSSMGVQSARA). The Clip domain occupies 31–89 (DCTTPDGDQGQCMPFSSCRTIEERLTEAQKAGQKVPADYASYLQKALCGEFNGVRHFCC). Cystine bridges form between cysteine 32–cysteine 88, cysteine 42–cysteine 78, cysteine 48–cysteine 89, cysteine 111–cysteine 243, cysteine 148–cysteine 164, and cysteine 188–cysteine 197. Positions 91–118 (SANIQHNSKVMSLFKDENFDCGNFLSQR) are linker. In terms of domain architecture, Peptidase S1 spans 119-373 (VSNGYEVKLS…YVQWITDTMA (255 aa)). Histidine 163 serves as the catalytic Charge relay system. Ca(2+)-binding residues include glutamate 179, arginine 181, threonine 184, and aspartate 187. Aspartate 223 serves as the catalytic Charge relay system. Residues asparagine 230 and asparagine 270 are each glycosylated (N-linked (GlcNAc...) asparagine). 2 disulfide bridges follow: cysteine 290–cysteine 304 and cysteine 314–cysteine 349. Residue serine 318 is the Charge relay system of the active site.

This sequence belongs to the peptidase S1 family. CLIP subfamily. Proteolytically cleaved by a tryspin-like protease which is likely to activate grass.

The protein resides in the secreted. Functionally, endopeptidase. Plays a key role in innate immunity by activating the Toll pathway in response to fungal and Gram-positive bacterial infections, presumably downstream of pattern-recognition receptors (PRR), such as PGRP-SA, GNBP1 and GNBP3, and upstream of spz processing enzyme SPE. The sequence is that of Serine protease grass from Drosophila melanogaster (Fruit fly).